A 630-amino-acid polypeptide reads, in one-letter code: 1-deoxy-D-xylulose-5-phosphate synthase (630 aa).

Thiamine diphosphate contacts are provided by residues H80 and 121–123; that span reads GHS. D152 contacts Mg(2+). Residues 153–154, N181, Y288, and E370 each bind thiamine diphosphate; that span reads GA. N181 lines the Mg(2+) pocket.

It belongs to the transketolase family. DXPS subfamily. As to quaternary structure, homodimer. Requires Mg(2+) as cofactor. The cofactor is thiamine diphosphate.

It catalyses the reaction D-glyceraldehyde 3-phosphate + pyruvate + H(+) = 1-deoxy-D-xylulose 5-phosphate + CO2. Its pathway is metabolic intermediate biosynthesis; 1-deoxy-D-xylulose 5-phosphate biosynthesis; 1-deoxy-D-xylulose 5-phosphate from D-glyceraldehyde 3-phosphate and pyruvate: step 1/1. In terms of biological role, catalyzes the acyloin condensation reaction between C atoms 2 and 3 of pyruvate and glyceraldehyde 3-phosphate to yield 1-deoxy-D-xylulose-5-phosphate (DXP). In Colwellia psychrerythraea (strain 34H / ATCC BAA-681) (Vibrio psychroerythus), this protein is 1-deoxy-D-xylulose-5-phosphate synthase.